The chain runs to 232 residues: Putative caffeoyl-CoA O-methyltransferase At1g67980 (232 aa).

K8 provides a ligand contact to substrate. Residues V52, E74, 76–77 (GV), S82, and D100 each bind S-adenosyl-L-methionine. D149 contacts substrate. A divalent metal cation is bound at residue D149. D151 serves as a coordination point for S-adenosyl-L-methionine. A divalent metal cation-binding residues include D175 and N176.

This sequence belongs to the class I-like SAM-binding methyltransferase superfamily. Cation-dependent O-methyltransferase family. CCoAMT subfamily. It depends on a divalent metal cation as a cofactor.

The catalysed reaction is (E)-caffeoyl-CoA + S-adenosyl-L-methionine = (E)-feruloyl-CoA + S-adenosyl-L-homocysteine + H(+). The protein operates within aromatic compound metabolism; phenylpropanoid biosynthesis. Its function is as follows. Methylates caffeoyl-CoA to feruloyl-CoA and 5-hydroxyferuloyl-CoA to sinapoyl-CoA. Plays a role in the synthesis of feruloylated polysaccharides. Involved in the reinforcement of the plant cell wall. Also involved in the responding to wounding or pathogen challenge by the increased formation of cell wall-bound ferulic acid polymers. This chain is Putative caffeoyl-CoA O-methyltransferase At1g67980, found in Arabidopsis thaliana (Mouse-ear cress).